We begin with the raw amino-acid sequence, 85 residues long: Arminin 524 (85 aa).

A signal peptide spans 1-18; sequence MKAVFAILFLAFIALTYA. Residues 19-57 constitute a propeptide that is removed on maturation; it reads KSYDEVKEEIKNEVEREIFEDLEEESDELDNDVEEFNDA. Ala-82 carries the alanine amide modification.

Belongs to the arminin family. Expressed in entodermal epithelium along the body column.

It localises to the secreted. The protein resides in the target cell membrane. In terms of biological role, antimicrobial peptide with a broad-spectrum antimicrobial activity. Keeps its antibacterial activity under a wide range of salt concentrations that mimic physiological conditions of human blood, which is surprising, since Hydra is an obligate freshwater animal with nearly no salt tolerance. Does not affect red blood cells. The protein is Arminin 524 of Hydra oligactis (Brown hydra).